A 121-amino-acid polypeptide reads, in one-letter code: MLSQVATPDECLRCGACCAHFRVSFYWAEAELMEEHLVEPLTPVYSCMRGTNQPEPRCQALTGEIGKEVGCSIYAVRSSTCREVQIADEQCNKARLAHQLIPLIQVSPADSENDHDYDQVS.

This sequence to E.coli YkgJ.

The chain is Putative ferredoxin from Acinetobacter calcoaceticus.